Reading from the N-terminus, the 223-residue chain is Ribonuclease T (223 aa).

In terms of domain architecture, Exonuclease spans 20-194; it reads VVIDVETAGF…YDTERTAELF (175 aa). Mg(2+) contacts are provided by Asp23, Glu25, His181, and Asp186. His181 functions as the Proton donor/acceptor in the catalytic mechanism.

Belongs to the RNase T family. Homodimer. Mg(2+) serves as cofactor.

Functionally, trims short 3' overhangs of a variety of RNA species, leaving a one or two nucleotide 3' overhang. Responsible for the end-turnover of tRNA: specifically removes the terminal AMP residue from uncharged tRNA (tRNA-C-C-A). Also appears to be involved in tRNA biosynthesis. The sequence is that of Ribonuclease T from Shewanella baltica (strain OS185).